A 747-amino-acid chain; its full sequence is Asparagine synthetase [glutamine-hydrolyzing] 2 (747 aa).

Cysteine 2 serves as the catalytic For GATase activity. The 217-residue stretch at 2-218 folds into the Glutamine amidotransferase type-2 domain; that stretch reads CGLAGIINLA…AGHYLEINLT (217 aa). Residues 52–56, 77–79, and aspartate 100 contribute to the L-glutamine site; these read RLSIL and NGE. Residue 395 to 396 coordinates ATP; that stretch reads SP.

The protein belongs to the asparagine synthetase family.

It catalyses the reaction L-aspartate + L-glutamine + ATP + H2O = L-asparagine + L-glutamate + AMP + diphosphate + H(+). It participates in amino-acid biosynthesis; L-asparagine biosynthesis; L-asparagine from L-aspartate (L-Gln route): step 1/1. This is Asparagine synthetase [glutamine-hydrolyzing] 2 (asnH) from Bacillus subtilis (strain 168).